The sequence spans 78 residues: UPF0349 protein BH3414 (78 aa).

The protein belongs to the UPF0349 family.

The sequence is that of UPF0349 protein BH3414 from Halalkalibacterium halodurans (strain ATCC BAA-125 / DSM 18197 / FERM 7344 / JCM 9153 / C-125) (Bacillus halodurans).